The primary structure comprises 230 residues: Ribonuclease 3 (230 aa).

The 130-residue stretch at 6 to 135 (TTELKERYGI…FLGALYLDQK (130 aa)) folds into the RNase III domain. Residue Glu-48 participates in Mg(2+) binding. Asp-52 is an active-site residue. Mg(2+) is bound by residues Asp-121 and Glu-124. Glu-124 is a catalytic residue. The 70-residue stretch at 161–230 (DHKTQLQEVL…AERALKSIPQ (70 aa)) folds into the DRBM domain.

The protein belongs to the ribonuclease III family. Homodimer. Mg(2+) is required as a cofactor.

It localises to the cytoplasm. It catalyses the reaction Endonucleolytic cleavage to 5'-phosphomonoester.. In terms of biological role, digests double-stranded RNA. Involved in the processing of primary rRNA transcript to yield the immediate precursors to the large and small rRNAs (23S and 16S). Processes some mRNAs, and tRNAs when they are encoded in the rRNA operon. Processes pre-crRNA and tracrRNA of type II CRISPR loci if present in the organism. This chain is Ribonuclease 3, found in Enterococcus faecalis (strain ATCC 700802 / V583).